The chain runs to 279 residues: Probable endonuclease 4 (279 aa).

Zn(2+)-binding residues include His69, His109, Glu145, Asp179, His182, His216, Asp229, His231, and Glu261.

Belongs to the AP endonuclease 2 family. Zn(2+) is required as a cofactor.

The enzyme catalyses Endonucleolytic cleavage to 5'-phosphooligonucleotide end-products.. Endonuclease IV plays a role in DNA repair. It cleaves phosphodiester bonds at apurinic or apyrimidinic (AP) sites, generating a 3'-hydroxyl group and a 5'-terminal sugar phosphate. The chain is Probable endonuclease 4 from Serratia proteamaculans (strain 568).